The chain runs to 306 residues: Large ribosomal subunit protein bL19m (306 aa).

Positions 34-43 (ENQEEQKKEA) are enriched in basic and acidic residues. A disordered region spans residues 34–53 (ENQEEQKKEAPPTTPTSPVN).

It belongs to the bacterial ribosomal protein bL19 family. Component of the mitochondrial ribosome large subunit (39S) which comprises a 16S rRNA and about 50 distinct proteins.

Its subcellular location is the mitochondrion. The polypeptide is Large ribosomal subunit protein bL19m (mRpL19) (Drosophila melanogaster (Fruit fly)).